We begin with the raw amino-acid sequence, 67 residues long: Large ribosomal subunit protein uL29 (67 aa).

Belongs to the universal ribosomal protein uL29 family.

The chain is Large ribosomal subunit protein uL29 from Wolbachia sp. subsp. Drosophila simulans (strain wRi).